The primary structure comprises 600 residues: ATP-dependent lipid A-core flippase (600 aa).

A run of 4 helical transmembrane segments spans residues 26–46, 82–102, 167–187, and 266–286; these read VGIF…QPML, LLIV…NYFL, VFLF…MLAI, and PMLQ…VLFL. The 292-residue stretch at 30-321 folds into the ABC transmembrane type-1 domain; the sequence is LLSIIGFVIF…LSEVSSTIQK (292 aa). In terms of domain architecture, ABC transporter spans 353-589; it reads LEVKNLSFFY…NGYYARLHAM (237 aa). 387 to 394 is a binding site for ATP; that stretch reads GRSGSGKS.

The protein belongs to the ABC transporter superfamily. Lipid exporter (TC 3.A.1.106) family. In terms of assembly, homodimer.

The protein resides in the cell inner membrane. The catalysed reaction is ATP + H2O + lipid A-core oligosaccharideSide 1 = ADP + phosphate + lipid A-core oligosaccharideSide 2.. In terms of biological role, involved in lipopolysaccharide (LPS) biosynthesis. Translocates lipid A-core from the inner to the outer leaflet of the inner membrane. Transmembrane domains (TMD) form a pore in the inner membrane and the ATP-binding domain (NBD) is responsible for energy generation. This chain is ATP-dependent lipid A-core flippase, found in Pseudomonas savastanoi pv. phaseolicola (strain 1448A / Race 6) (Pseudomonas syringae pv. phaseolicola (strain 1448A / Race 6)).